The primary structure comprises 1031 residues: Ookinete maturation protein 1 (1031 aa).

Disordered stretches follow at residues 125-184, 340-405, and 609-697; these read HNEN…PELE, KEAE…DGMR, and DAEL…NDSI. Over residues 141-168 the composition is skewed to basic residues; sequence QKLKKKKKIKKGTKKKSINKISILKHKS. Positions 171–180 are enriched in polar residues; the sequence is SFPSTQNENT. Residues 340–357 show a composition bias toward basic and acidic residues; the sequence is KEAEEEERKKNEDEHILE. A compositionally biased stretch (polar residues) spans 377 to 394; that stretch reads LGKSFKNNESFELNSPQK. Residues 581 to 646 are a coiled coil; the sequence is IDEENSVFVE…ETQMAGKEEK (66 aa). The span at 610–648 shows a compositional bias: basic and acidic residues; sequence AELRKDEEEDKSKNNEKDSKSEERDILETQMAGKEEKPV. The span at 649–659 shows a compositional bias: basic residues; it reads LKKKKKNKGKQ. Residues 660-686 show a composition bias toward basic and acidic residues; the sequence is RNREGKGVVEKGYDAKREKKENEEKNK.

In the mosquito vector midgut, plays a role in ookinete development. This is Ookinete maturation protein 1 from Plasmodium berghei (strain Anka).